The chain runs to 89 residues: Small ribosomal subunit protein uS14A (89 aa).

Residues 34 to 54 (ESLRKLPRDSNPNRLKNRDKI) are disordered.

Belongs to the universal ribosomal protein uS14 family. As to quaternary structure, part of the 30S ribosomal subunit. Contacts proteins S3 and S10.

Binds 16S rRNA, required for the assembly of 30S particles and may also be responsible for determining the conformation of the 16S rRNA at the A site. The chain is Small ribosomal subunit protein uS14A from Streptococcus pyogenes serotype M1.